Reading from the N-terminus, the 181-residue chain is Ribosome maturation factor RimP (181 aa).

Belongs to the RimP family.

Its subcellular location is the cytoplasm. Required for maturation of 30S ribosomal subunits. This is Ribosome maturation factor RimP from Sphingopyxis alaskensis (strain DSM 13593 / LMG 18877 / RB2256) (Sphingomonas alaskensis).